The primary structure comprises 397 residues: Cytochrome b (397 aa).

Transmembrane regions (helical) follow at residues 38–58, 82–104, 119–139, and 185–205; these read FGSLAGICLVIQIVTGVFLAM, WLLRYMHANGASMFFIVVYLHIF, VWCLGVVIFLLMIVTAFIGYV, and FFSLHYLLPFILVGASLLHLA. His88 and His102 together coordinate heme b. Heme b contacts are provided by His189 and His203. Residue His208 participates in a ubiquinone binding. 4 helical membrane passes run 231–251, 295–315, 327–347, and 354–373; these read FYVKDLVGWVAFAIFFSIWIF, AGGVAAIALVFISLLALPFFK, IYQGIFWLLLADCLLLGWIGC, and FVTIGQISSFFFFLFFAITP.

The protein belongs to the cytochrome b family. As to quaternary structure, the main subunits of complex b-c1 are: cytochrome b, cytochrome c1 and the Rieske protein. Heme b serves as cofactor.

The protein resides in the mitochondrion inner membrane. Its function is as follows. Component of the ubiquinol-cytochrome c reductase complex (complex III or cytochrome b-c1 complex) that is part of the mitochondrial respiratory chain. The b-c1 complex mediates electron transfer from ubiquinol to cytochrome c. Contributes to the generation of a proton gradient across the mitochondrial membrane that is then used for ATP synthesis. The protein is Cytochrome b (MT-CYB) of Oryza sativa subsp. indica (Rice).